We begin with the raw amino-acid sequence, 353 residues long: Photosystem II D2 protein (353 aa).

Position 2 is an N-acetylthreonine (Thr2). Thr2 carries the phosphothreonine modification. Residues 41 to 61 traverse the membrane as a helical segment; the sequence is CAYFALGGWFTGTTFVTSWYT. His118 contacts chlorophyll a. Residues 125–141 traverse the membrane as a helical segment; the sequence is GFMLRQFELARSVQLRP. Residues Gln130 and Asn143 each coordinate pheophytin a. A helical membrane pass occupies residues 153–166; sequence VFVSVFLIYPLGQS. Chlorophyll a is bound at residue His198. Residues 208–228 form a helical membrane-spanning segment; it reads AALLCAIHGATVENTLFEDGD. Positions 215 and 262 each coordinate a plastoquinone. A Fe cation-binding site is contributed by His215. His269 is a binding site for Fe cation. The helical transmembrane segment at 279 to 295 threads the bilayer; it reads GLWMSALGVVGLALNLR.

Belongs to the reaction center PufL/M/PsbA/D family. PSII is composed of 1 copy each of membrane proteins PsbA, PsbB, PsbC, PsbD, PsbE, PsbF, PsbH, PsbI, PsbJ, PsbK, PsbL, PsbM, PsbT, PsbX, PsbY, PsbZ, Psb30/Ycf12, at least 3 peripheral proteins of the oxygen-evolving complex and a large number of cofactors. It forms dimeric complexes. It depends on The D1/D2 heterodimer binds P680, chlorophylls that are the primary electron donor of PSII, and subsequent electron acceptors. It shares a non-heme iron and each subunit binds pheophytin, quinone, additional chlorophylls, carotenoids and lipids. There is also a Cl(-1) ion associated with D1 and D2, which is required for oxygen evolution. The PSII complex binds additional chlorophylls, carotenoids and specific lipids. as a cofactor.

The protein localises to the plastid. Its subcellular location is the chloroplast thylakoid membrane. It catalyses the reaction 2 a plastoquinone + 4 hnu + 2 H2O = 2 a plastoquinol + O2. Photosystem II (PSII) is a light-driven water:plastoquinone oxidoreductase that uses light energy to abstract electrons from H(2)O, generating O(2) and a proton gradient subsequently used for ATP formation. It consists of a core antenna complex that captures photons, and an electron transfer chain that converts photonic excitation into a charge separation. The D1/D2 (PsbA/PsbD) reaction center heterodimer binds P680, the primary electron donor of PSII as well as several subsequent electron acceptors. D2 is needed for assembly of a stable PSII complex. This Nandina domestica (Heavenly bamboo) protein is Photosystem II D2 protein.